We begin with the raw amino-acid sequence, 498 residues long: ATP synthase subunit beta, chloroplastic (498 aa).

Residue 172–179 participates in ATP binding; it reads GGAGVGKT.

Belongs to the ATPase alpha/beta chains family. As to quaternary structure, F-type ATPases have 2 components, CF(1) - the catalytic core - and CF(0) - the membrane proton channel. CF(1) has five subunits: alpha(3), beta(3), gamma(1), delta(1), epsilon(1). CF(0) has four main subunits: a(1), b(1), b'(1) and c(9-12).

It is found in the plastid. It localises to the chloroplast thylakoid membrane. The catalysed reaction is ATP + H2O + 4 H(+)(in) = ADP + phosphate + 5 H(+)(out). Its function is as follows. Produces ATP from ADP in the presence of a proton gradient across the membrane. The catalytic sites are hosted primarily by the beta subunits. This is ATP synthase subunit beta, chloroplastic from Nicotiana sp. (Tobacco).